A 460-amino-acid polypeptide reads, in one-letter code: Protein unc-93 homolog A (460 aa).

5 helical membrane passes run 7-27, 41-61, 68-88, 89-109, and 139-159; these read ILIV…LQSL, SLSV…PIVI, WTIV…FYAS, WYTL…LWAA, and LFFL…SLIF. N-linked (GlcNAc...) asparagine glycosylation is found at Asn-168 and Asn-189. 6 helical membrane passes run 203–223, 292–312, 321–341, 345–365, 390–410, and 412–432; these read TLLG…AVFL, FVGY…LLFG, ICLF…LLLW, PNDF…DAIW, LWES…CVSV, and LYIL…VEYL.

This sequence belongs to the unc-93 family.

It localises to the membrane. The polypeptide is Protein unc-93 homolog A (unc93a) (Xenopus laevis (African clawed frog)).